Reading from the N-terminus, the 192-residue chain is Probable cobalt-precorrin-6B C(15)-methyltransferase (decarboxylating) (192 aa).

S-adenosyl-L-methionine is bound by residues Thr20, 44 to 48 (GSGTG), Glu68, and Ala96.

Belongs to the methyltransferase superfamily. Archaeal-type CbiT family.

It catalyses the reaction Co-precorrin-6B + S-adenosyl-L-methionine = Co-precorrin-7 + S-adenosyl-L-homocysteine + CO2. Its pathway is cofactor biosynthesis; adenosylcobalamin biosynthesis; cob(II)yrinate a,c-diamide from sirohydrochlorin (anaerobic route): step 8/10. Catalyzes the methylation of C-15 in cobalt-precorrin-6B followed by the decarboxylation of C-12 to form cobalt-precorrin-7. This is Probable cobalt-precorrin-6B C(15)-methyltransferase (decarboxylating) from Sulfolobus acidocaldarius (strain ATCC 33909 / DSM 639 / JCM 8929 / NBRC 15157 / NCIMB 11770).